Reading from the N-terminus, the 546-residue chain is Chaperonin GroEL (546 aa).

Residues 30-33, Lys51, 87-91, Gly415, and Asp495 contribute to the ATP site; these read TLGP and DGTTT.

The protein belongs to the chaperonin (HSP60) family. As to quaternary structure, forms a cylinder of 14 subunits composed of two heptameric rings stacked back-to-back. Interacts with the co-chaperonin GroES.

Its subcellular location is the cytoplasm. The catalysed reaction is ATP + H2O + a folded polypeptide = ADP + phosphate + an unfolded polypeptide.. Together with its co-chaperonin GroES, plays an essential role in assisting protein folding. The GroEL-GroES system forms a nano-cage that allows encapsulation of the non-native substrate proteins and provides a physical environment optimized to promote and accelerate protein folding. The protein is Chaperonin GroEL of Brucella melitensis biotype 1 (strain ATCC 23456 / CCUG 17765 / NCTC 10094 / 16M).